Reading from the N-terminus, the 823-residue chain is Protein FAM193B (823 aa).

Disordered regions lie at residues 1–78, 158–191, 209–281, and 381–409; these read MTRR…TSQS, SCKS…NSGD, SPHS…PTTP, and CEAD…HQRD. Positions 26-36 are enriched in pro residues; sequence PQAPEPPPPPS. The segment covering 52–64 has biased composition (basic and acidic residues); that stretch reads PYRDDPREEDEPK. Low complexity-rich tracts occupy residues 168 to 184 and 263 to 281; these read SHSS…SSSS and SHPG…PTTP. Residues 382 to 393 show a composition bias toward acidic residues; sequence EADEGLGEEEDS. Positions 422-484 form a coiled coil; it reads GHNAEKEKAQ…RLQEIKNTVK (63 aa). Disordered regions lie at residues 503 to 583 and 599 to 775; these read FSKE…PENG and WVKT…PKDM. Composition is skewed to polar residues over residues 516–526 and 641–657; these read LAPSNPSGSSE and QGNQ…SQSP. Residues Ser694, Ser706, and Ser813 each carry the phosphoserine modification.

This sequence belongs to the FAM193 family.

The protein localises to the cytoplasm. It is found in the nucleus. This chain is Protein FAM193B (FAM193B), found in Bos taurus (Bovine).